Reading from the N-terminus, the 540-residue chain is Phosphoenolpyruvate carboxykinase (ATP) (540 aa).

Arg65 serves as a coordination point for substrate. Lys87 is subject to N6-acetyllysine. Residues Tyr207 and Lys213 each coordinate substrate. Residues Lys213, His232, and 248 to 256 (GLSGTGKTT) each bind ATP. Mn(2+)-binding residues include Lys213 and His232. Asp269 serves as a coordination point for Mn(2+). ATP contacts are provided by residues Glu297, Arg333, 449-450 (RI), and Thr455. Residue Arg333 coordinates substrate. Lys523 carries the N6-acetyllysine modification.

Belongs to the phosphoenolpyruvate carboxykinase (ATP) family. As to quaternary structure, monomer. Mn(2+) serves as cofactor.

It localises to the cytoplasm. The catalysed reaction is oxaloacetate + ATP = phosphoenolpyruvate + ADP + CO2. Its pathway is carbohydrate biosynthesis; gluconeogenesis. Its function is as follows. Involved in the gluconeogenesis. Catalyzes the conversion of oxaloacetate (OAA) to phosphoenolpyruvate (PEP) through direct phosphoryl transfer between the nucleoside triphosphate and OAA. The protein is Phosphoenolpyruvate carboxykinase (ATP) of Escherichia fergusonii (strain ATCC 35469 / DSM 13698 / CCUG 18766 / IAM 14443 / JCM 21226 / LMG 7866 / NBRC 102419 / NCTC 12128 / CDC 0568-73).